The primary structure comprises 429 residues: MFADSAKIFIRSGKGGDGHVSFRREIFVPAGGPDGGDGGKGGNVIFEVDEGLNTLGDFRLKRKYSAGDGENGQKKRCSGKDGEDLIIKVPEGTIIKETETGKVITDMSHENRREVILRGGRGGKGNQHYATPTMQVPKYAQPGQKAMELNVTLELKVIADVGLVGFPNVGKSTLLSRVTNAKPKIANYHFTTLNPNLGVVDLDGADGFVIADIPGLIEGASEGIGLGHEFLKHIERTRVIIHLVDAASTEGRDPVEDIEKINHELSSYNEGLLLKPQVIAANKTDVLYGEEEEEAINKIKEAFESKGIKVFPISAVSGQGVKELLYYVSDLLKTVDATPIVFEKEYFPEENLVMSEPYTVEYNETEEVYVVEGPRIERMLGYTNIDTEKGFEFFQKFLKENGILDQLEELGIGEGDTVRMYGLEFDYYK.

An Obg domain is found at 1–158 (MFADSAKIFI…LNVTLELKVI (158 aa)). The OBG-type G domain occupies 159 to 333 (ADVGLVGFPN…LLYYVSDLLK (175 aa)). GTP-binding positions include 165–172 (GFPNVGKS), 190–194 (FTTLN), 212–215 (DIPG), 282–285 (NKTD), and 314–316 (SAV). Positions 172 and 192 each coordinate Mg(2+). One can recognise an OCT domain in the interval 350 to 429 (ENLVMSEPYT…MYGLEFDYYK (80 aa)).

This sequence belongs to the TRAFAC class OBG-HflX-like GTPase superfamily. OBG GTPase family. In terms of assembly, monomer. Requires Mg(2+) as cofactor.

The protein localises to the cytoplasm. Its function is as follows. An essential GTPase which binds GTP, GDP and possibly (p)ppGpp with moderate affinity, with high nucleotide exchange rates and a fairly low GTP hydrolysis rate. Plays a role in control of the cell cycle, stress response, ribosome biogenesis and in those bacteria that undergo differentiation, in morphogenesis control. The polypeptide is GTPase Obg (Lachnoclostridium phytofermentans (strain ATCC 700394 / DSM 18823 / ISDg) (Clostridium phytofermentans)).